The sequence spans 388 residues: Formate-dependent phosphoribosylglycinamide formyltransferase (388 aa).

Residues 11–12 and glutamate 71 each bind N(1)-(5-phospho-beta-D-ribosyl)glycinamide; that span reads EL. ATP is bound by residues arginine 103, lysine 144, 149 to 154, 184 to 187, and glutamate 192; these read SSGKGQ and EEFI. Positions 108-300 constitute an ATP-grasp domain; it reads DLAAKELGLK…EFELHLRAVL (193 aa). The Mg(2+) site is built by glutamate 257 and glutamate 270. N(1)-(5-phospho-beta-D-ribosyl)glycinamide-binding positions include aspartate 277, lysine 349, and 356–357; that span reads RR.

It belongs to the PurK/PurT family. Homodimer.

It carries out the reaction N(1)-(5-phospho-beta-D-ribosyl)glycinamide + formate + ATP = N(2)-formyl-N(1)-(5-phospho-beta-D-ribosyl)glycinamide + ADP + phosphate + H(+). It functions in the pathway purine metabolism; IMP biosynthesis via de novo pathway; N(2)-formyl-N(1)-(5-phospho-D-ribosyl)glycinamide from N(1)-(5-phospho-D-ribosyl)glycinamide (formate route): step 1/1. Involved in the de novo purine biosynthesis. Catalyzes the transfer of formate to 5-phospho-ribosyl-glycinamide (GAR), producing 5-phospho-ribosyl-N-formylglycinamide (FGAR). Formate is provided by PurU via hydrolysis of 10-formyl-tetrahydrofolate. This chain is Formate-dependent phosphoribosylglycinamide formyltransferase, found in Bacteroides thetaiotaomicron (strain ATCC 29148 / DSM 2079 / JCM 5827 / CCUG 10774 / NCTC 10582 / VPI-5482 / E50).